We begin with the raw amino-acid sequence, 456 residues long: MNNLTCFKAYDIRGRLGEELNEDIAWRIGRAYGEYLKPKTIVLGGDVRLTSEALKLALAKGLQDAGVDVLDIGMSGTEEIYFATFHLGVDGGIEVTASHNPMDYNGMKLVREGARPISGDTGLRDVQRLAEAGDFPPVNDAARGSYRQISLRDAYIDHLLAYISVNNLTPLKLVVNSGNGAAGPVIDAIEARLKALGAPVEFIKIHNTPDGTFPNGIPNPLLPECRDDTRKAVIEHGADMGIAFDGDFDRCFLFDEKGQFIEGYYIVGLLAEAFLEKHPGAKIIHDPRLTWNTEAVVTAAGGTPVMSKTGHAFIKERMRTEDAIYGGEMSAHHYFRDFAYCDSGMIPWLLVAELVCLKGQSLGELVRDRMAAFPASGEINSRLAEPAAAIARVEAHFAEEAQAVDRTDGLSMSFADWRFNLRSSNTEPVVRLNVESRGDIPLMEARTKEILQLLNS.

Ser98 functions as the Phosphoserine intermediate in the catalytic mechanism. Residues Ser98, Asp245, Asp247, and Asp249 each coordinate Mg(2+).

This sequence belongs to the phosphohexose mutase family. The cofactor is Mg(2+).

The enzyme catalyses alpha-D-mannose 1-phosphate = D-mannose 6-phosphate. It functions in the pathway nucleotide-sugar biosynthesis; GDP-alpha-D-mannose biosynthesis; alpha-D-mannose 1-phosphate from D-fructose 6-phosphate: step 2/2. The protein operates within bacterial outer membrane biogenesis; LPS O-antigen biosynthesis. Its function is as follows. Involved in GDP-mannose biosynthesis which serves as the activated sugar nucleotide precursor for mannose residues in cell surface polysaccharides. This enzyme participates in synthesis of the LPS O antigen. This Salmonella montevideo protein is Phosphomannomutase (manB).